A 393-amino-acid chain; its full sequence is NAD(P)H-quinone oxidoreductase subunit H, chloroplastic (393 aa).

This sequence belongs to the complex I 49 kDa subunit family. In terms of assembly, NDH is composed of at least 16 different subunits, 5 of which are encoded in the nucleus.

The protein localises to the plastid. The protein resides in the chloroplast thylakoid membrane. It catalyses the reaction a plastoquinone + NADH + (n+1) H(+)(in) = a plastoquinol + NAD(+) + n H(+)(out). The enzyme catalyses a plastoquinone + NADPH + (n+1) H(+)(in) = a plastoquinol + NADP(+) + n H(+)(out). Its function is as follows. NDH shuttles electrons from NAD(P)H:plastoquinone, via FMN and iron-sulfur (Fe-S) centers, to quinones in the photosynthetic chain and possibly in a chloroplast respiratory chain. The immediate electron acceptor for the enzyme in this species is believed to be plastoquinone. Couples the redox reaction to proton translocation, and thus conserves the redox energy in a proton gradient. This chain is NAD(P)H-quinone oxidoreductase subunit H, chloroplastic, found in Lepidium virginicum (Virginia pepperweed).